Consider the following 159-residue polypeptide: Ribosomal RNA large subunit methyltransferase H (159 aa).

S-adenosyl-L-methionine is bound by residues Leu76, Gly108, and 127–132 (FGLLTF).

Belongs to the RNA methyltransferase RlmH family. In terms of assembly, homodimer.

Its subcellular location is the cytoplasm. It carries out the reaction pseudouridine(1915) in 23S rRNA + S-adenosyl-L-methionine = N(3)-methylpseudouridine(1915) in 23S rRNA + S-adenosyl-L-homocysteine + H(+). Functionally, specifically methylates the pseudouridine at position 1915 (m3Psi1915) in 23S rRNA. The chain is Ribosomal RNA large subunit methyltransferase H from Streptococcus thermophilus (strain CNRZ 1066).